A 1227-amino-acid polypeptide reads, in one-letter code: Beta-alanyl-bioamine nonribosomal peptide synthetase (1227 aa).

The tract at residues 1–850 (MPQSTAQLKS…FGKNSRDFKL (850 aa)) is adenylation. One can recognise a Carrier domain in the interval 851-931 (SRGRERARKV…SILTSLQNTE (81 aa)). Ser-892 is modified (O-(pantetheine 4'-phosphoryl)serine). Positions 932-1227 (SDFLKTQEPF…YMIKELNPSS (296 aa)) are condensation.

The protein belongs to the NRP synthetase family. Requires pantetheine 4'-phosphate as cofactor. In terms of tissue distribution, in virgin and paired males, bilaterally expressed in some cells in the head. During pairing, expressed throughout the ventral side of the body probably in ciliated neurons. Highly expressed in virgin females in cells throughout the body and only weakly expressed in sexually mature females. In virgin females, expressed in some cells in the head and on the dorsal surface and lateral edges of body.

It carries out the reaction tryptamine + beta-alanine + ATP = beta-alanyl-tryptamine + AMP + diphosphate + H(+). It catalyses the reaction beta-alanine + ATP + H(+) = beta-alanyl-5'-AMP + diphosphate. The catalysed reaction is beta-alanyl-5'-AMP + holo-[peptidyl-carrier protein] = beta-alanyl-[peptidyl-carrier protein] + AMP + H(+). The enzyme catalyses beta-alanyl-[peptidyl-carrier protein] + tryptamine = beta-alanyl-tryptamine + holo-[peptidyl-carrier protein] + H(+). In terms of biological role, catalyzes the condensation of beta-alanine with tryptamine to form beta-alanyl-tryptamine (BATT). Beta-alanyl-tryptamine is an essential pheromone produced by the male that stimulates female sexual development during pairing. The protein is Beta-alanyl-bioamine nonribosomal peptide synthetase of Schistosoma mansoni (Blood fluke).